The following is a 234-amino-acid chain: MDALIKPLRAGKPDAKPADPKGTEFRPAELDPAEFLAAAVKPDQPRPSRGEAEQAVKTLLAYIGEDTAREGLLDTPRRVVEAYDELFQGYHQCPAEVLNRTFGETAGYDDFVLIRDMSFTSHCEHHVMPFYGKAHIAYTPVERVVGLSKLARLVDIFAHRLQTQEHLTAQIAAAVDEVLKPRGVAVMIEAEHTCMSVRGIAKQGAVTFTSRFTGMFRDNPAEQARFMSMIRGGR.

A disordered region spans residues 1–26; that stretch reads MDALIKPLRAGKPDAKPADPKGTEFR. The span at 11 to 26 shows a compositional bias: basic and acidic residues; sequence GKPDAKPADPKGTEFR. Residues Cys-123, His-126, and Cys-194 each contribute to the Zn(2+) site.

The protein belongs to the GTP cyclohydrolase I family. Toroid-shaped homodecamer, composed of two pentamers of five dimers.

The enzyme catalyses GTP + H2O = 7,8-dihydroneopterin 3'-triphosphate + formate + H(+). Its pathway is cofactor biosynthesis; 7,8-dihydroneopterin triphosphate biosynthesis; 7,8-dihydroneopterin triphosphate from GTP: step 1/1. This chain is GTP cyclohydrolase 1, found in Rhodopseudomonas palustris (strain BisB18).